Reading from the N-terminus, the 290-residue chain is Endoplasmic reticulum-Golgi intermediate compartment protein 1 (290 aa).

At 1-26 the chain is on the cytoplasmic side; it reads MPFDFRRFDIYRKVPKDLTQPTYTGA. The helical transmembrane segment at 27–47 threads the bilayer; it reads IISICCCLFILFLFLSELTGF. At 48 to 254 the chain is on the lumenal side; sequence ITTEVVNELY…RRQPLYRFIT (207 aa). A glycan (N-linked (GlcNAc...) asparagine) is linked at N74. A helical transmembrane segment spans residues 255–275; sequence TICAIIGGTFTVAGILDSCIF. The Cytoplasmic segment spans residues 276-290; that stretch reads TASEAWKKIQLGKMH.

The protein belongs to the ERGIC family. May form a heteromeric complex composed of ERGIC1, ERGIC2 and ERGIC3. Within the complex, the interaction with ERGIC3 is direct. Interacts with ERGIC3/ERV46. In terms of processing, N-glycosylated.

The protein resides in the endoplasmic reticulum membrane. It localises to the endoplasmic reticulum-Golgi intermediate compartment membrane. The protein localises to the golgi apparatus membrane. In terms of biological role, possible role in transport between endoplasmic reticulum and Golgi. The sequence is that of Endoplasmic reticulum-Golgi intermediate compartment protein 1 (ERGIC1) from Homo sapiens (Human).